A 124-amino-acid chain; its full sequence is UPF0231 protein Shewmr4_0656 (124 aa).

It belongs to the UPF0231 family.

The polypeptide is UPF0231 protein Shewmr4_0656 (Shewanella sp. (strain MR-4)).